A 332-amino-acid polypeptide reads, in one-letter code: Ribosomal RNA small subunit methyltransferase C (332 aa).

Belongs to the methyltransferase superfamily. RsmC family. In terms of assembly, monomer.

It is found in the cytoplasm. The catalysed reaction is guanosine(1207) in 16S rRNA + S-adenosyl-L-methionine = N(2)-methylguanosine(1207) in 16S rRNA + S-adenosyl-L-homocysteine + H(+). Functionally, specifically methylates the guanine in position 1207 of 16S rRNA in the 30S particle. The polypeptide is Ribosomal RNA small subunit methyltransferase C (Pseudomonas aeruginosa (strain UCBPP-PA14)).